A 1215-amino-acid polypeptide reads, in one-letter code: Zinc finger E-box-binding homeobox 2 (1215 aa).

The disordered stretch occupies residues 1–111 (MKQPIMADGP…ILQASVAGPE (111 aa)). Residues 12-24 (CKRRKQANPRRKN) show a composition bias toward basic residues. The span at 57–74 (DQDTSPASMPNHESSPHM) shows a compositional bias: polar residues. Basic and acidic residues predominate over residues 89–98 (RESVVEHSWH). Ser142 carries the post-translational modification Phosphoserine. C2H2-type zinc fingers lie at residues 211–234 (LTCPYCDRGYKRLTSLKEHIKYRH), 241–263 (FSCPLCSYTFAYRTQLERHMVTH), and 282–304 (FKCTECGKAFKYKHHLKEHLRIH). A C2H2-type 4; atypical zinc finger spans residues 310-334 (YECPNCKKRFSHSGSYSSHISSKKC). Ser356, Ser360, and Ser364 each carry phosphoserine. An N6-acetyllysine modification is found at Lys377. Lys391 is covalently cross-linked (Glycyl lysine isopeptide (Lys-Gly) (interchain with G-Cter in SUMO); alternate). Residue Lys391 forms a Glycyl lysine isopeptide (Lys-Gly) (interchain with G-Cter in SUMO2); alternate linkage. An SMAD-MH2 binding domain region spans residues 437–487 (QHLGVGMEAPLLGFPTMNSNLSEVQKVLQIVDNTVSRQKMDCKTEDISKLK). Residues Lys479 and Lys555 each participate in a glycyl lysine isopeptide (Lys-Gly) (interchain with G-Cter in SUMO2) cross-link. Residues 581-605 (FSCQFCKESFPGPIPLHQHERYLCK) form a C2H2-type 5; degenerate zinc finger. Glycyl lysine isopeptide (Lys-Gly) (interchain with G-Cter in SUMO2) cross-links involve residues Lys611 and Lys632. Positions 644 to 703 (GLTSPINPYKDHMSVLKAYYAMNMEPNSDELLKISIAVGLPQEFVKEWFEQRKVYQYSNS) form a DNA-binding region, homeobox; atypical. At Ser647 the chain carries Phosphoserine. Disordered stretches follow at residues 702–740 (NSRSPSLERTSKPLAPNSNPTTKDSLLPRSPVKPMDSIT) and 772–811 (VDKLDHSRSNTPSPLNLSSTSSKNSHSSSYTPNSFSSEEL). Lys713 participates in a covalent cross-link: Glycyl lysine isopeptide (Lys-Gly) (interchain with G-Cter in SUMO2). Ser731 and Ser780 each carry phosphoserine. Residues 780-808 (SNTPSPLNLSSTSSKNSHSSSYTPNSFSS) show a composition bias toward low complexity. At Thr782 the chain carries Phosphothreonine. Ser784 is modified (phosphoserine). Lys866 is covalently cross-linked (Glycyl lysine isopeptide (Lys-Gly) (interchain with G-Cter in SUMO); alternate). A Glycyl lysine isopeptide (Lys-Gly) (interchain with G-Cter in SUMO2); alternate cross-link involves residue Lys866. 2 C2H2-type zinc fingers span residues 999–1021 (YACDLCDKTFQKSSSLLRHKYEH) and 1027–1049 (HQCQICKKAFKHKHHLIEHSRLH). The C2H2-type 8; atypical zinc-finger motif lies at 1055 to 1076 (YQCDKCGKRFSHSGSYSQHMNH). The segment at 1117–1215 (TPQGYSDSEE…EEDNMEDGME (99 aa)) is disordered. Residues Ser1122 and Ser1124 each carry the phosphoserine modification. The segment covering 1127–1149 (RESMPRDGESEKEHEKEGEEGYG) has biased composition (basic and acidic residues). The segment covering 1157-1167 (DEEEEEEEEES) has biased composition (acidic residues). Composition is skewed to basic and acidic residues over residues 1168–1179 (ENKSMDTDPETI) and 1186–1205 (GDHSMDDSSEDGKMETKSDH). A Phosphoserine modification is found at Ser1203. Residues 1206–1215 (EEDNMEDGME) are compositionally biased toward acidic residues.

This sequence belongs to the delta-EF1/ZFH-1 C2H2-type zinc-finger family. Interacts with CBX4 and CTBP1. Binds activated SMAD1, activated SMAD2 and activated SMAD3; binding with SMAD4 is not detected. Post-translationally, sumoylation on Lys-391 and Lys-866 is promoted by the E3 SUMO-protein ligase CBX4, and impairs interaction with CTBP1 and transcription repression activity.

The protein localises to the nucleus. Its subcellular location is the chromosome. Functionally, transcriptional inhibitor that binds to DNA sequence 5'-CACCT-3' in different promoters. Represses transcription of E-cadherin. Represses expression of MEOX2. The chain is Zinc finger E-box-binding homeobox 2 (Zeb2) from Mus musculus (Mouse).